A 230-amino-acid chain; its full sequence is Ribonuclease 3 (230 aa).

In terms of domain architecture, RNase III spans 10-133; the sequence is DPRLLSRIGY…IIGAIYLDSG (124 aa). A Mg(2+)-binding site is contributed by Glu46. Asp50 is an active-site residue. 2 residues coordinate Mg(2+): Asp119 and Glu122. The active site involves Glu122. The region spanning 161 to 230 is the DRBM domain; sequence DPKSRLQEYL…AAEILKLLEQ (70 aa).

It belongs to the ribonuclease III family. Homodimer. Requires Mg(2+) as cofactor.

The protein localises to the cytoplasm. It carries out the reaction Endonucleolytic cleavage to 5'-phosphomonoester.. Its function is as follows. Digests double-stranded RNA. Involved in the processing of primary rRNA transcript to yield the immediate precursors to the large and small rRNAs (23S and 16S). Processes some mRNAs, and tRNAs when they are encoded in the rRNA operon. Processes pre-crRNA and tracrRNA of type II CRISPR loci if present in the organism. The sequence is that of Ribonuclease 3 (rnc) from Acinetobacter pittii (strain PHEA-2).